The primary structure comprises 336 residues: Anthranilate phosphoribosyltransferase (336 aa).

5-phospho-alpha-D-ribose 1-diphosphate is bound by residues Gly83, 86-87 (GD), Thr91, 93-96 (NIST), 111-119 (KHGNRSVSS), and Ser123. Residue Gly83 coordinates anthranilate. Mg(2+) is bound at residue Ser95. Asn114 is an anthranilate binding site. Arg169 contacts anthranilate. Positions 227 and 228 each coordinate Mg(2+).

Belongs to the anthranilate phosphoribosyltransferase family. As to quaternary structure, homodimer. Mg(2+) is required as a cofactor.

It carries out the reaction N-(5-phospho-beta-D-ribosyl)anthranilate + diphosphate = 5-phospho-alpha-D-ribose 1-diphosphate + anthranilate. Its pathway is amino-acid biosynthesis; L-tryptophan biosynthesis; L-tryptophan from chorismate: step 2/5. Functionally, catalyzes the transfer of the phosphoribosyl group of 5-phosphorylribose-1-pyrophosphate (PRPP) to anthranilate to yield N-(5'-phosphoribosyl)-anthranilate (PRA). This chain is Anthranilate phosphoribosyltransferase, found in Vibrio campbellii (strain ATCC BAA-1116).